The chain runs to 261 residues: Phosphoinositide-3-kinase-interacting protein 1 (261 aa).

An N-terminal signal peptide occupies residues 1–21; that stretch reads MLLAWVRTILVSNMLLAEAYG. The Extracellular segment spans residues 22–166; that stretch reads SGGCFWDNGH…NSKEKKDLGT (145 aa). A Kringle domain is found at 24–101; the sequence is GCFWDNGHLY…EKRPCQDLRC (78 aa). 3 disulfide bridges follow: C25–C101, C46–C82, and C70–C96. The span at 90 to 101 shows a compositional bias: basic and acidic residues; sequence APEKRPCQDLRC. A disordered region spans residues 90–122; sequence APEKRPCQDLRCPDTTSQGLPTSATETEEAAEV. The helical transmembrane segment at 167 to 187 threads the bilayer; that stretch reads LGYVLGITMMVIIVVIGAGIV. Residues 188-261 lie on the Cytoplasmic side of the membrane; sequence LGYTYKRGKD…LMGQAGTPGA (74 aa).

It localises to the cell membrane. Functionally, negative regulator of hepatic phosphatidylinositol 3-kinase (PI3K) activity. This Bos taurus (Bovine) protein is Phosphoinositide-3-kinase-interacting protein 1 (PIK3IP1).